The primary structure comprises 485 residues: Probable cobyric acid synthase (485 aa).

A GATase cobBQ-type domain is found at 250 to 435; the sequence is EIEIAVIRLP…LHGLFDNKNI (186 aa). Cys-328 serves as the catalytic Nucleophile. His-427 is an active-site residue.

This sequence belongs to the CobB/CobQ family. CobQ subfamily.

Its pathway is cofactor biosynthesis; adenosylcobalamin biosynthesis. Catalyzes amidations at positions B, D, E, and G on adenosylcobyrinic A,C-diamide. NH(2) groups are provided by glutamine, and one molecule of ATP is hydrogenolyzed for each amidation. In Methanosarcina barkeri (strain Fusaro / DSM 804), this protein is Probable cobyric acid synthase.